The following is an 86-amino-acid chain: Collagen alpha-1(XII) chain (86 aa).

Residues 1 to 12 (NQPGPPGPPGPP) show a composition bias toward pro residues. The segment at 1–86 (NQPGPPGPPG…PGRPGDSGIR (86 aa)) is disordered. Residues Pro6, Pro9, Pro12, Pro18, Pro24, Pro27, Pro30, Pro42, Pro51, Pro54, Pro65, Pro74, Pro77, and Pro80 each carry the hydroxyproline modification. Positions 16–25 (GEPGPGGRPG) are enriched in gly residues. The segment covering 35–50 (PQGERGLPGEXGERGL) has biased composition (low complexity). A compositionally biased stretch (low complexity) spans 57 to 71 (QGESRTGPPGSTGSR).

The protein belongs to the fibril-associated collagens with interrupted helices (FACIT) family. Trimer of identical chains each containing 190 kDa of non-triple-helical sequences. In terms of processing, the triple-helical tail is stabilized by disulfide bonds at each end. Prolines at the third position of the tripeptide repeating unit (G-X-Y) are hydroxylated in some or all of the chains.

The protein localises to the secreted. The protein resides in the extracellular space. It is found in the extracellular matrix. Its function is as follows. Type XII collagen interacts with type I collagen-containing fibrils, the COL1 domain could be associated with the surface of the fibrils, and the COL2 and NC3 domains may be localized in the perifibrillar matrix. In Bos taurus (Bovine), this protein is Collagen alpha-1(XII) chain (COL12A1).